The chain runs to 188 residues: Probable nicotinate-nucleotide adenylyltransferase (188 aa).

The protein belongs to the NadD family.

It catalyses the reaction nicotinate beta-D-ribonucleotide + ATP + H(+) = deamido-NAD(+) + diphosphate. It functions in the pathway cofactor biosynthesis; NAD(+) biosynthesis; deamido-NAD(+) from nicotinate D-ribonucleotide: step 1/1. Catalyzes the reversible adenylation of nicotinate mononucleotide (NaMN) to nicotinic acid adenine dinucleotide (NaAD). This chain is Probable nicotinate-nucleotide adenylyltransferase, found in Listeria innocua serovar 6a (strain ATCC BAA-680 / CLIP 11262).